We begin with the raw amino-acid sequence, 432 residues long: Glutamate-1-semialdehyde 2,1-aminomutase (432 aa).

Lys267 is subject to N6-(pyridoxal phosphate)lysine.

Belongs to the class-III pyridoxal-phosphate-dependent aminotransferase family. HemL subfamily. As to quaternary structure, homodimer. The cofactor is pyridoxal 5'-phosphate.

The protein resides in the cytoplasm. The catalysed reaction is (S)-4-amino-5-oxopentanoate = 5-aminolevulinate. Its pathway is porphyrin-containing compound metabolism; protoporphyrin-IX biosynthesis; 5-aminolevulinate from L-glutamyl-tRNA(Glu): step 2/2. The polypeptide is Glutamate-1-semialdehyde 2,1-aminomutase (Rhodococcus erythropolis (strain PR4 / NBRC 100887)).